The following is a 543-amino-acid chain: CBS domain-containing protein CBSCBSPB1 (543 aa).

Positions 1–35 (MASQGGPRRSLSVTTASLHGKKKSMDMAERGLDTG) are disordered. S17 bears the Phosphoserine mark. Positions 23–35 (KSMDMAERGLDTG) are enriched in basic and acidic residues. 4 consecutive CBS domains span residues 59-118 (RLSK…NVEE), 125-183 (MTKN…RAAE), 225-285 (IIPD…LPPS), and 293-350 (MTQN…AGTT). Residues 372–393 (LSPNEDDEDSRSESSMKVASEA) form a disordered region. Residues 402–489 (ANTFSFKIED…KSLRLHLDDS (88 aa)) form the PB1 domain. Residues 518–538 (AYSGVAAGAALVAGLGFMAFL) traverse the membrane as a helical segment.

The protein resides in the membrane. The sequence is that of CBS domain-containing protein CBSCBSPB1 (CBSCBSPB1) from Arabidopsis thaliana (Mouse-ear cress).